A 346-amino-acid polypeptide reads, in one-letter code: Protein RecA (346 aa).

67 to 74 lines the ATP pocket; it reads GPESSGKT.

The protein belongs to the RecA family.

It is found in the cytoplasm. Functionally, can catalyze the hydrolysis of ATP in the presence of single-stranded DNA, the ATP-dependent uptake of single-stranded DNA by duplex DNA, and the ATP-dependent hybridization of homologous single-stranded DNAs. It interacts with LexA causing its activation and leading to its autocatalytic cleavage. The protein is Protein RecA of Frankia alni (strain DSM 45986 / CECT 9034 / ACN14a).